We begin with the raw amino-acid sequence, 152 residues long: uncharacterized protein (152 aa).

This is an uncharacterized protein from Acheta domesticus (House cricket).